A 281-amino-acid chain; its full sequence is MEQQLNLGHLLTAARLLDIGALDISSLDLGALTSTSSSPGSSSPAMFDLSNESELRSLFCGKLKVDKKQSSCASNASTSSQPYCSSPPARKSSKHSRTAHNELEKTRRANLRGCLETLKMLVPCVSDATRNTTLALLTRARDHIIELQDSNAAQMKKLNDLRDEQDELVAELAQLQADEEVAQATSQACQTLSQSRPESRASSFTSTSSRDSPCYLEYSPSSKPMDSHKPTIIDLYAEGLIPRGPITFPRPLVYPHNVFDLMNLPPTPFDVSQFLPINLQV.

Residues 71-80 (SCASNASTSS) are compositionally biased toward low complexity. Positions 71–105 (SCASNASTSSQPYCSSPPARKSSKHSRTAHNELEK) are disordered. Positions 95–108 (HSRTAHNELEKTRR) are basic motif. The bHLH domain maps to 95-147 (HSRTAHNELEKTRRANLRGCLETLKMLVPCVSDATRNTTLALLTRARDHIIEL). The segment at 109-147 (ANLRGCLETLKMLVPCVSDATRNTTLALLTRARDHIIEL) is helix-loop-helix motif. The stretch at 144–185 (IIELQDSNAAQMKKLNDLRDEQDELVAELAQLQADEEVAQAT) forms a coiled coil. The segment at 189-213 (CQTLSQSRPESRASSFTSTSSRDSP) is disordered. Residues 200-212 (RASSFTSTSSRDS) are compositionally biased toward low complexity.

As to quaternary structure, forms heterodimer with mxl-1 in the presence and absence of DNA. Ubiquitinated. Expressed in intestinal cells in adults. Expressed in D-type motor neuron cell bodies.

It localises to the nucleus. Its function is as follows. Transcriptional regulator which binds to the E box motif 5'-CACGTG-3', when in a heterodimeric complex with mxl-1. Involved in the control of lifespan in response to dietary restriction, the decline in protein homeostasis associated with normal aging, germline signaling and may overlap with the insulin-like signaling pathway. Plays a role in autophagy. Involved in promoting infection by the microsporidian pathogen N.parisii, possibly together with transcription factors pha-4 and zip-10. In response to neuronal injury, mdl-1 is targeted by sdz-33 for ubiquitin-mediated degradation, probably thereby reducing levels of mdl-1-mxl-1 heterodimers, allowing free mxl-1 to form complexes with tdpt-1 and thus inhibiting tdpt-1-dependent sumoylation of ets-4. The sequence is that of Mad-like protein 1 from Caenorhabditis elegans.